A 190-amino-acid chain; its full sequence is Putative manganese efflux pump MntP (190 aa).

5 consecutive transmembrane segments (helical) span residues 37-57, 64-84, 111-131, 135-155, and 164-184; these read LILA…GWGI, LSFI…GVGA, LILG…MAFV, IITL…VGAW, and FGGW…GNIL.

The protein belongs to the MntP (TC 9.B.29) family.

It localises to the cell membrane. Functionally, probably functions as a manganese efflux pump. This chain is Putative manganese efflux pump MntP, found in Corynebacterium efficiens (strain DSM 44549 / YS-314 / AJ 12310 / JCM 11189 / NBRC 100395).